Reading from the N-terminus, the 879-residue chain is Leucine--tRNA ligase (879 aa).

The 'HIGH' region motif lies at 43 to 53 (PYPSGRIHMGH). A 'KMSKS' region motif is present at residues 636–640 (KMSKS). Lys-639 contacts ATP.

The protein belongs to the class-I aminoacyl-tRNA synthetase family.

Its subcellular location is the cytoplasm. It carries out the reaction tRNA(Leu) + L-leucine + ATP = L-leucyl-tRNA(Leu) + AMP + diphosphate. This chain is Leucine--tRNA ligase, found in Afipia carboxidovorans (strain ATCC 49405 / DSM 1227 / KCTC 32145 / OM5) (Oligotropha carboxidovorans).